We begin with the raw amino-acid sequence, 175 residues long: MSSFIRWYNSRLAARPLLTQSVTTAFLFATGDVTAQQLVEKRGAQKHDLVRTGRMALYGGFVFGPVATTWFAFLARRVNVRNNKKAEVLARVACDQLGFAPVMIGVFLSSMATMEGKSVKERIDKTWWPALKANWMVWPAVQVINFSLIPLQYRLFFANIIAIGWNSYLSWVNSQ.

Transmembrane regions (helical) follow at residues 55-75, 92-112, and 143-163; these read MALYGGFVFGPVATTWFAFLA, VACDQLGFAPVMIGVFLSSMA, and VINFSLIPLQYRLFFANIIAI.

Belongs to the peroxisomal membrane protein PXMP2/4 family.

It localises to the mitochondrion inner membrane. May be involved in cellular response to stress. Required to maintain mitochondrial DNA (mtDNA) integrity and stability. The protein is Protein SYM1 (SYM1) of Gibberella zeae (strain ATCC MYA-4620 / CBS 123657 / FGSC 9075 / NRRL 31084 / PH-1) (Wheat head blight fungus).